We begin with the raw amino-acid sequence, 403 residues long: Octaketide synthase 2 (403 aa).

Residue Cys174 is part of the active site. Residues Ser281 and Gly318–Ala321 each bind CoA.

Belongs to the thiolase-like superfamily. Chalcone/stilbene synthases family. Homodimer.

Its pathway is secondary metabolite biosynthesis; flavonoid biosynthesis. In terms of biological role, catalyzes the iterative condensations of 8 molecules of malonyl-CoA to produce aromatic octaketides, SEK4 and SEK4b, the products of the minimal polyketide synthase for the benzoisochromanequinone actinorhodin. May be involved in the biosynthesis of the octaketide barbaloin. This is Octaketide synthase 2 (PKS4) from Aloe arborescens (Kidachi aloe).